A 153-amino-acid polypeptide reads, in one-letter code: Bacteriohemerythrin (153 aa).

H21, H57, E61, H76, H80, H115, and D120 together coordinate Fe cation.

Belongs to the hemerythrin family. As to quaternary structure, monomer.

Oxygen-binding protein. May be involved in a storage mechanism or for delivery to oxygen-requiring enzymes. The oxygen-binding site contains two iron atoms. This Pseudomonas paraeruginosa (strain DSM 24068 / PA7) (Pseudomonas aeruginosa (strain PA7)) protein is Bacteriohemerythrin.